Here is a 413-residue protein sequence, read N- to C-terminus: Serine hydroxymethyltransferase (413 aa).

(6S)-5,6,7,8-tetrahydrofolate contacts are provided by residues Leu-115 and 119–121 (GHL). An N6-(pyridoxal phosphate)lysine modification is found at Lys-224.

The protein belongs to the SHMT family. As to quaternary structure, homodimer. The cofactor is pyridoxal 5'-phosphate.

Its subcellular location is the cytoplasm. It catalyses the reaction (6R)-5,10-methylene-5,6,7,8-tetrahydrofolate + glycine + H2O = (6S)-5,6,7,8-tetrahydrofolate + L-serine. It participates in one-carbon metabolism; tetrahydrofolate interconversion. The protein operates within amino-acid biosynthesis; glycine biosynthesis; glycine from L-serine: step 1/1. Its function is as follows. Catalyzes the reversible interconversion of serine and glycine with tetrahydrofolate (THF) serving as the one-carbon carrier. This reaction serves as the major source of one-carbon groups required for the biosynthesis of purines, thymidylate, methionine, and other important biomolecules. Also exhibits THF-independent aldolase activity toward beta-hydroxyamino acids, producing glycine and aldehydes, via a retro-aldol mechanism. The polypeptide is Serine hydroxymethyltransferase (Mycoplasma mycoides subsp. mycoides SC (strain CCUG 32753 / NCTC 10114 / PG1)).